A 178-amino-acid polypeptide reads, in one-letter code: uncharacterized protein (178 aa).

2 disordered regions span residues N89–I115 and D136–A178. A compositionally biased stretch (low complexity) spans A98–T109. Residues D167–A178 show a composition bias toward acidic residues.

The protein localises to the cytoplasm. It is found in the nucleus. This is an uncharacterized protein from Schizosaccharomyces pombe (strain 972 / ATCC 24843) (Fission yeast).